The sequence spans 409 residues: Endoglucanase B (409 aa).

The N-terminal stretch at 1 to 21 (MKLKRIAALLTAAVMSVGVMA) is a signal peptide. Residues 23–66 (CGGSKSDDKSKADTKSAAETSGAEGDSSESEEIPVSQTHTNDPM) form a disordered region. The segment covering 27-38 (KSDDKSKADTKS) has biased composition (basic and acidic residues). The segment covering 57 to 66 (VSQTHTNDPM) has biased composition (polar residues). Residue Glu-212 is the Proton donor of the active site. Glu-332 serves as the catalytic Nucleophile.

The protein belongs to the glycosyl hydrolase 5 (cellulase A) family.

It catalyses the reaction Endohydrolysis of (1-&gt;4)-beta-D-glucosidic linkages in cellulose, lichenin and cereal beta-D-glucans.. The sequence is that of Endoglucanase B (celB) from Ruminococcus albus.